Consider the following 398-residue polypeptide: Phosphoglycerate kinase (398 aa).

Residues 21-23, arginine 41, 64-67, arginine 123, and arginine 156 contribute to the substrate site; these read DFN and HLGR. Residues lysine 207, glycine 294, glutamate 325, and 354-357 each bind ATP; that span reads GGDS.

The protein belongs to the phosphoglycerate kinase family. In terms of assembly, monomer.

The protein resides in the cytoplasm. It catalyses the reaction (2R)-3-phosphoglycerate + ATP = (2R)-3-phospho-glyceroyl phosphate + ADP. It functions in the pathway carbohydrate degradation; glycolysis; pyruvate from D-glyceraldehyde 3-phosphate: step 2/5. In Salinibacter ruber (strain DSM 13855 / M31), this protein is Phosphoglycerate kinase.